Reading from the N-terminus, the 554-residue chain is Raftlin (554 aa).

G2 is lipidated: N-myristoyl glycine. Residue C3 is the site of S-palmitoyl cysteine attachment. A phosphoserine mark is found at S183 and S199. 3 disordered regions span residues 192 to 249, 441 to 488, and 504 to 554; these read CTLG…NEAG, KKRE…DQFS, and GRAS…TEAN. Composition is skewed to basic and acidic residues over residues 198–209 and 475–487; these read SSLENDTPKAAE and QAEE…EDQF. S507 and S530 each carry phosphoserine. Residues 526–542 are compositionally biased toward basic and acidic residues; it reads HNRDSVALRHSNPRAEA.

This sequence belongs to the raftlin family. Interacts with TLR4; the interaction occurs in response to lipopolysaccharide stimulation. Interacts with CLTC; the interaction occurs in response to pathogens. Interacts with AP2A1 and AP2B1. In terms of tissue distribution, expressed in T-cells, B-cells, thymus and spleen (at protein level). Expressed in dendritic cells, macrophages, heart, lung and small intestine.

It localises to the cell membrane. It is found in the cytoplasm. Its subcellular location is the membrane raft. The protein resides in the endosome. The protein localises to the early endosome. Functionally, involved in protein trafficking via association with clathrin and AP2 complex. Upon bacterial lipopolysaccharide stimulation, mediates internalization of TLR4 to endosomes in dendritic cells and macrophages, and internalization of poly(I:C) to TLR3-positive endosomes in myeloid dendritic cells and epithelial cells; resulting in activation of TICAM1-mediated signaling and subsequent IFNB1 production. Involved in T-cell antigen receptor-mediated signaling by regulating tyrosine kinase LCK localization, T-cell dependent antibody production and cytokine secretion. May regulate B-cell antigen receptor-mediated signaling. May play a pivotal role in the formation and/or maintenance of lipid rafts. The sequence is that of Raftlin (Rftn1) from Mus musculus (Mouse).